Reading from the N-terminus, the 207-residue chain is C-type lectin domain family 2 member D (207 aa).

Residues 1–41 lie on the Cytoplasmic side of the membrane; sequence MCVTKASLPMLSPTGSPQEVEVGKILQGKRHGTISPESCAK. 2 positions are modified to phosphoserine: Ser7 and Ser12. Residues 42–62 form a helical; Signal-anchor for type II membrane protein membrane-spanning segment; sequence LYCYYGVIMVLTVAVIALSVA. The Extracellular portion of the chain corresponds to 63 to 207; that stretch reads LSATKTEQIP…LHCQTPFFPS (145 aa). Residues Cys80 and Cys91 are joined by a disulfide bond. The 116-residue stretch at 87–202 folds into the C-type lectin domain; it reads VENKCFYFSE…LNSYSLHCQT (116 aa). Asn100 carries an N-linked (GlcNAc...) asparagine glycan.

As to quaternary structure, homodimer; disulfide-linked. Post-translationally, N-glycosylated. Detected in fetal heart, brain, lung, chondrocytes, perichondrium and osteoblasts, and in adult splenocytes, thymocytes, lymph-node cells, osteoblasts, growth plate chondrocytes and skeletal muscle overlying the bone (at protein level). Ubiquitous. Detected in thymus, bone marrow, lung, gut, heart, skeletal muscle, ovary, spleen, ileum, liver and kidney.

It localises to the cell membrane. Receptor for KLRB1B that protects target cells against natural killer cell-mediated lysis. Inhibits osteoclast formation. Binds high molecular weight sulfated glycosaminoglycans. This chain is C-type lectin domain family 2 member D (Clec2d), found in Mus musculus (Mouse).